The primary structure comprises 153 residues: Riboflavin synthase (153 aa).

It belongs to the DMRL synthase family. As to quaternary structure, homooligomer. Mg(2+) is required as a cofactor.

It catalyses the reaction 2 6,7-dimethyl-8-(1-D-ribityl)lumazine + H(+) = 5-amino-6-(D-ribitylamino)uracil + riboflavin. Its pathway is cofactor biosynthesis; riboflavin biosynthesis; riboflavin from 2-hydroxy-3-oxobutyl phosphate and 5-amino-6-(D-ribitylamino)uracil: step 2/2. With respect to regulation, inhibited by EDTA. Functionally, the relatively low activity of this enzyme suggested that 6,7-dimethyl-8-ribityllumazine might not be its natural substrate. This Methanothermobacter marburgensis (strain ATCC BAA-927 / DSM 2133 / JCM 14651 / NBRC 100331 / OCM 82 / Marburg) (Methanobacterium thermoautotrophicum) protein is Riboflavin synthase (ribC).